The sequence spans 388 residues: Sphingosine N-acyltransferase-like protein FUM17 (388 aa).

Helical transmembrane passes span 60-80 (SWAL…IHPV) and 113-133 (LWDL…RKFI). An N-linked (GlcNAc...) asparagine glycan is attached at N146. The 218-residue stretch at 151 to 368 (GKQQRFMEQM…LLRNAYRLLF (218 aa)) folds into the TLC domain. The next 4 membrane-spanning stretches (helical) occupy residues 166-186 (FAVM…LWIF), 204-224 (IKFY…VLVL), 241-261 (IITI…IGIS), and 339-359 (FITF…LYCL).

Belongs to the sphingosine N-acyltransferase family.

It localises to the endoplasmic reticulum membrane. Its pathway is mycotoxin biosynthesis. Sphingosine N-acyltransferase-like protein; part of the gene cluster that mediates the biosynthesis of fumonisins B1 (FB1), B2 (FB2), B3 (FB3), and B4 (FB4), which are carcinogenic mycotoxins. May contribute to the biosynthesis of ceramide via interaction with Cer3. Does not confer resistance to FB1. The biosynthesis starts with the FUM1-catalyzed carbon chain assembly from one molecule of acetyl-CoA, eight molecules of malonyl-CoA, and two molecules of methionine (in S-adenosyl form). The C18 polyketide chain is released from the enzyme by a nucleophilic attack of a carbanion, which is derived from R-carbon of alanine by decarboxylation, on the carbonyl carbon of polyketide acyl chain. This step is catalyzed by the pyridoxal 5'-phosphate-dependent aminoacyl transferase FUM8. The resultant 3-keto intermediate is then stereospecifically reduced to a 3-hydroxyl product by reductase FUM13. Subsequent oxidations at C-10 by the cytochrome P450 monooxygenase FUM2, C-14 and C-15 by FUM6, FUM12 or FUM15, tricarballylic esterification of the hydroxyl groups on C-14 and C-15 by acyltransferase FUM14, and C-5 hydroxylation by 2-keto-glutarate-dependent dioxygenase FUM3 furnish the biosynthesis of fumonisins. The tricarballylic moieties are most likely derived from the citric acid cycle, and their addition to the carbon backbone may involve FUM7, FUM10, FUM11 and FUM14. The protein is Sphingosine N-acyltransferase-like protein FUM17 of Gibberella moniliformis (strain M3125 / FGSC 7600) (Maize ear and stalk rot fungus).